The following is a 405-amino-acid chain: Type II secretion system protein F (405 aa).

Over 1 to 169 (MPLYRYKALD…SRALKGKVIN (169 aa)) the chain is Cytoplasmic. Residues aspartate 98, glutamine 151, and aspartate 155 each coordinate Ca(2+). Residues 170 to 190 (ALIYPAILLAVVGCALLFLLG) form a helical membrane-spanning segment. Residues 191 to 218 (YVVPQFAQMYESLDVALPWFTQAVLSVG) are Periplasmic-facing. A helical membrane pass occupies residues 219-239 (LLVRDWWLVLVVIPGVLGLWL). Residues 240–370 (DRKRRNAAFR…LETAQAIDRA (131 aa)) lie on the Cytoplasmic side of the membrane. The chain crosses the membrane as a helical span at residues 371–391 (LAALVPLITLVLASVVGLVII). Residues 392-405 (SVLVPLYDLTNAIG) lie on the Periplasmic side of the membrane.

The protein belongs to the GSP F family. In terms of assembly, type II secretion system is composed of four main components: the outer membrane complex, the inner membrane complex, the cytoplasmic secretion ATPase and the periplasm-spanning pseudopilus. Homodimer. Interacts with XpsE and XpsL components.

The protein localises to the cell inner membrane. Its function is as follows. Component of the type II secretion system inner membrane complex required for the energy-dependent secretion of extracellular factors such as proteases and toxins from the periplasm. The protein is Type II secretion system protein F (xpsF) of Xanthomonas campestris pv. campestris (strain ATCC 33913 / DSM 3586 / NCPPB 528 / LMG 568 / P 25).